We begin with the raw amino-acid sequence, 413 residues long: Putative competence-damage inducible protein (413 aa).

It belongs to the CinA family.

The protein is Putative competence-damage inducible protein of Thermoanaerobacter pseudethanolicus (strain ATCC 33223 / 39E) (Clostridium thermohydrosulfuricum).